Reading from the N-terminus, the 219-residue chain is Protein OPG170 (219 aa).

The signal sequence occupies residues 1–16 (MYSLVFVILMCIPFSF). An N-linked (GlcNAc...) asparagine; by host glycan is attached at Asn70.

It belongs to the orthopoxvirus OPG170 family.

It is found in the secreted. May interact with several cellular chemokines to interfere with chemokine-glycosaminoglycan (GAG) interactions at the cell surface to alter chemotaxis of nearby responsive cells. The polypeptide is Protein OPG170 (OPG170) (Bos taurus (Bovine)).